Consider the following 182-residue polypeptide: Ribosome-recycling factor (182 aa).

It belongs to the RRF family.

The protein resides in the cytoplasm. Responsible for the release of ribosomes from messenger RNA at the termination of protein biosynthesis. May increase the efficiency of translation by recycling ribosomes from one round of translation to another. This Nostoc punctiforme (strain ATCC 29133 / PCC 73102) protein is Ribosome-recycling factor.